The chain runs to 435 residues: MESIIALFQGMGIMHITLGQVIMIIVSLILLWLAIARRFEPLLLLPIGFGGLLSNIPEAGLAMTALDHLLHYAHTEQLTIIAEKVNSSSLDVHTIKQAIAFAPPSVQNELEVIASDLGYNAGILALFYKVAIGYGVAPLIIFMGVGAMTDFGPLLANPRTLLLGAAAQFGIFTTVLGALGLNWLGIIDFSLPQAAAIGIIGGADGPTAIYLASKLAPELLGAIAVAAYSYMALVPLIQPPIMKALTTEQERKIRMVQLRTVSAREKIVFPIVLLLLVALLLPDAAPLLGMFCFGNLMRASGVVERLNETAQNALINIVTIFLGLSVGAKLVADKFLQPQTLGILLLGIVAFAIGTASGVIMAKIMNAFSKHKINPLIGSAGVSAVPMAARVSNKIGLEADKQNFLLMHAMGPNVAGVISSAIAAGIMLKYISTMI.

A run of 9 helical transmembrane segments spans residues 13-35, 42-64, 123-145, 165-187, 215-237, 267-289, 309-328, 340-362, and 404-426; these read IMHI…WLAI, LLLL…LAMT, ILAL…FMGV, AAAQ…LGII, LAPE…VPLI, IVFP…PLLG, TAQN…SVGA, TLGI…VIMA, and FLLM…AAGI.

It belongs to the GcdB/MmdB/OadB family. As to quaternary structure, heterotrimer of an alpha, a beta and a gamma subunit. Requires Na(+) as cofactor.

The protein localises to the cell membrane. The enzyme catalyses oxaloacetate + 2 Na(+)(in) + H(+) = pyruvate + 2 Na(+)(out) + CO2. In terms of biological role, catalyzes the decarboxylation of oxaloacetate coupled to Na(+) translocation. This is Oxaloacetate decarboxylase beta chain (oadB) from Haemophilus ducreyi (strain 35000HP / ATCC 700724).